Consider the following 157-residue polypeptide: Crossover junction endodeoxyribonuclease RuvC (157 aa).

Active-site residues include Asp9, Glu70, and Asp142. The Mg(2+) site is built by Asp9, Glu70, and Asp142.

It belongs to the RuvC family. Homodimer which binds Holliday junction (HJ) DNA. The HJ becomes 2-fold symmetrical on binding to RuvC with unstacked arms; it has a different conformation from HJ DNA in complex with RuvA. In the full resolvosome a probable DNA-RuvA(4)-RuvB(12)-RuvC(2) complex forms which resolves the HJ. Requires Mg(2+) as cofactor.

The protein resides in the cytoplasm. The catalysed reaction is Endonucleolytic cleavage at a junction such as a reciprocal single-stranded crossover between two homologous DNA duplexes (Holliday junction).. The RuvA-RuvB-RuvC complex processes Holliday junction (HJ) DNA during genetic recombination and DNA repair. Endonuclease that resolves HJ intermediates. Cleaves cruciform DNA by making single-stranded nicks across the HJ at symmetrical positions within the homologous arms, yielding a 5'-phosphate and a 3'-hydroxyl group; requires a central core of homology in the junction. The consensus cleavage sequence is 5'-(A/T)TT(C/G)-3'. Cleavage occurs on the 3'-side of the TT dinucleotide at the point of strand exchange. HJ branch migration catalyzed by RuvA-RuvB allows RuvC to scan DNA until it finds its consensus sequence, where it cleaves and resolves the cruciform DNA. This chain is Crossover junction endodeoxyribonuclease RuvC, found in Cyanothece sp. (strain PCC 7425 / ATCC 29141).